We begin with the raw amino-acid sequence, 623 residues long: Heterogeneous nuclear ribonucleoprotein Q (623 aa).

A2 is subject to N-acetylalanine. The residue at position 159 (S159) is a Phosphoserine. RRM domains follow at residues 162 to 241, 243 to 325, and 338 to 408; these read TEIF…ISVA, NRLF…WADP, and KVLF…FAKP. K168 is covalently cross-linked (Glycyl lysine isopeptide (Lys-Gly) (interchain with G-Cter in SUMO2)). K221 is modified (N6-acetyllysine). Position 363 is an N6-acetyllysine (K363). Y373 carries the phosphotyrosine modification. Positions 400–561 are interaction with APOBEC1; sequence NIEIVFAKPP…GARGGRGGNV (162 aa). R444 bears the Asymmetric dimethylarginine; by PRMT1; alternate mark. Position 444 is an omega-N-methylarginine; by PRMT1; alternate (R444). 6 tandem repeats follow at residues 448 to 450, 451 to 453, 460 to 464, 469 to 472, 478 to 480, and 485 to 488. Residues 448–559 form an 8 X 3 AA repeats of R-G-G region; that stretch reads RGGRGGYGYP…VRGARGGRGG (112 aa). The interval 460–488 is 3 X 4 AA repeats of Y-Y-G-Y; sequence YYGYEDYYDYYGYDYHNYRGGYEDPYYGY. At R496 the chain carries Omega-N-methylarginine; by PRMT1. The disordered stretch occupies residues 497–623; sequence GRGGRGARGA…YQDTFGQQWK (127 aa). The 1-4 repeat unit spans residues 498 to 500; sequence RGG. The span at 504-522 shows a compositional bias: low complexity; the sequence is RGAAPSRGRGAAPPRGRAG. At R510 the chain carries Asymmetric dimethylarginine; by PRMT1. Residues R518, R526, R536, and R539 each carry the asymmetric dimethylarginine; by PRMT1; alternate modification. An omega-N-methylarginine; by PRMT1; alternate mark is found at R518, R526, R536, and R539. The tract at residues 518–549 is interaction with SMN; that stretch reads RGRAGYSQRGGPGSARGVRGARGGAQQQRGRG. One copy of the 1-5 repeat lies at 526–528; the sequence is RGG. 3 consecutive repeat copies span residues 539 to 541, 554 to 556, and 557 to 559. Residues 550-562 are compositionally biased toward gly residues; sequence VRGARGGRGGNVG. The Bipartite nuclear localization signal signature appears at 564–578; that stretch reads KRKADGYNQPDSKRR. The span at 580–595 shows a compositional bias: polar residues; it reads TNNQNWGSQPIAQQPL. S587 bears the Phosphoserine mark. Residue K607 forms a Glycyl lysine isopeptide (Lys-Gly) (interchain with G-Cter in SUMO2) linkage. The segment covering 611-623 has biased composition (polar residues); sequence QEFYQDTFGQQWK.

As to quaternary structure, isoform 1 is a component of the APOB mRNA editosome complex and interacts with APOBEC1 and A1CF (APOBEC1 complementation factor). Part of a complex associated with the FOS mCRD domain and consisting of PABPC1, PAIP1, CSDE1/UNR, HNRPD and SYNCRIP. Isoform 3 interacts with HNRPR. Interacts with POLR2A hyperphosphorylated C-terminal domain. Isoform 1, isoform 2 and isoform 3 interact with SMN. Isoform 3 interacts through its C-terminal domain with SYT7, SYT8 and SYT9. The non-phosphorylated and phosphorylated forms are colocalized with PAIP1 in polysomes. Interacts with HABP4. Identified in a histone pre-mRNA complex, at least composed of ERI1, LSM11, SLBP, SNRPB, SYNCRIP and YBX1. Identified in the spliceosome C complex. Component of the coding region determinant (CRD)-mediated complex, composed of DHX9, HNRNPU, IGF2BP1, SYNCRIP and YBX1. Identified in a mRNP complex, at least composed of DHX9, DDX3X, ELAVL1, HNRNPU, IGF2BP1, ILF3, PABPC1, PCBP2, PTBP2, STAU1, STAU2, SYNCRIP and YBX1. Identified in a mRNP granule complex, at least composed of ACTB, ACTN4, DHX9, ERG, HNRNPA1, HNRNPA2B1, HNRNPAB, HNRNPD, HNRNPL, HNRNPR, HNRNPU, HSPA1, HSPA8, IGF2BP1, ILF2, ILF3, NCBP1, NCL, PABPC1, PABPC4, PABPN1, RPLP0, RPS3, RPS3A, RPS4X, RPS8, RPS9, SYNCRIP, YBX1 and untranslated mRNAs. Interacts with GTPBP1. Component of the GAIT complex; in humans the complex assembly seems to be a two-step process in which EPRS1 first associates with SYNCRIP to form a pre-GAIT complex which is deficient in GAIT element binding. (Microbial infection) Interacts with minute virus of mice (MVM) NS1 protein. In terms of assembly, (Microbial infection) Interacts with herpes virus 8/HHV-8 protein vIRF-1; this interaction induces ubiquitination and degradation of SYNCRIP. In terms of processing, phosphorylated on tyrosine. The membrane-bound form found in microsomes is phosphorylated in vitro by insulin receptor tyrosine kinase (INSR). Phosphorylation is inhibited upon binding to RNA, whereas the cytoplasmic form is poorly phosphorylated. As to expression, ubiquitously expressed. Detected in heart, brain, pancreas, placenta, spleen, lung, liver, skeletal muscle, kidney, thymus, prostate, uterus, small intestine, colon, peripheral blood and testis.

The protein resides in the cytoplasm. It is found in the microsome. The protein localises to the endoplasmic reticulum. Its subcellular location is the nucleus. It localises to the nucleoplasm. In terms of biological role, heterogenous nuclear ribonucleoprotein (hnRNP) implicated in mRNA processing mechanisms. Component of the CRD-mediated complex that promotes MYC mRNA stability. Isoform 1, isoform 2 and isoform 3 are associated in vitro with pre-mRNA, splicing intermediates and mature mRNA protein complexes. Isoform 1 binds to apoB mRNA AU-rich sequences. Isoform 1 is part of the APOB mRNA editosome complex and may modulate the postranscriptional C to U RNA-editing of the APOB mRNA through either by binding to A1CF (APOBEC1 complementation factor), to APOBEC1 or to RNA itself. May be involved in translationally coupled mRNA turnover. Implicated with other RNA-binding proteins in the cytoplasmic deadenylation/translational and decay interplay of the FOS mRNA mediated by the major coding-region determinant of instability (mCRD) domain. Interacts in vitro preferentially with poly(A) and poly(U) RNA sequences. Isoform 3 may be involved in cytoplasmic vesicle-based mRNA transport through interaction with synaptotagmins. Component of the GAIT (gamma interferon-activated inhibitor of translation) complex which mediates interferon-gamma-induced transcript-selective translation inhibition in inflammation processes. Upon interferon-gamma activation assembles into the GAIT complex which binds to stem loop-containing GAIT elements in the 3'-UTR of diverse inflammatory mRNAs (such as ceruplasmin) and suppresses their translation; seems not to be essential for GAIT complex function. This Homo sapiens (Human) protein is Heterogeneous nuclear ribonucleoprotein Q (SYNCRIP).